We begin with the raw amino-acid sequence, 335 residues long: Methylthioribose-1-phosphate isomerase (335 aa).

Substrate is bound by residues 47–49, Arg81, and Gln184; that span reads RGA. Asp225 serves as the catalytic Proton donor. 235 to 236 serves as a coordination point for substrate; that stretch reads NK.

This sequence belongs to the eIF-2B alpha/beta/delta subunits family. MtnA subfamily.

The enzyme catalyses 5-(methylsulfanyl)-alpha-D-ribose 1-phosphate = 5-(methylsulfanyl)-D-ribulose 1-phosphate. Its pathway is amino-acid biosynthesis; L-methionine biosynthesis via salvage pathway; L-methionine from S-methyl-5-thio-alpha-D-ribose 1-phosphate: step 1/6. In terms of biological role, catalyzes the interconversion of methylthioribose-1-phosphate (MTR-1-P) into methylthioribulose-1-phosphate (MTRu-1-P). This Synechococcus sp. (strain CC9902) protein is Methylthioribose-1-phosphate isomerase.